A 622-amino-acid chain; its full sequence is Polygalacturonase 1 beta-like protein 1 (622 aa).

Positions M1 to A21 are cleaved as a signal peptide. The FXXY 1 repeat unit spans residues F118–Y121. N-linked (GlcNAc...) asparagine glycosylation occurs at N125. FXXY repeat units follow at residues F126–Y129, F140–Y143, F154–Y157, F168–Y171, F182–Y185, F196–Y199, F210–Y213, F224–Y227, F239–Y242, F253–Y256, and F267–Y270. N-linked (GlcNAc...) asparagine glycosylation occurs at N278. FXXY repeat units lie at residues F281 to Y284, F295 to Y298, F309 to Y312, F323 to Y326, F337 to Y340, F351 to Y354, and F365 to Y368. N-linked (GlcNAc...) asparagine glycosylation occurs at N371. FXXY repeat units lie at residues F374–Y377 and F384–Y387. N-linked (GlcNAc...) asparagine glycans are attached at residues N388 and N461. In terms of domain architecture, BURP spans F407–A621.

As to expression, expressed in flowers and stems.

Its subcellular location is the secreted. The protein localises to the extracellular space. It is found in the apoplast. The protein resides in the cell wall. Involved in cell size determination. In Arabidopsis thaliana (Mouse-ear cress), this protein is Polygalacturonase 1 beta-like protein 1.